The primary structure comprises 412 residues: 23S rRNA (uracil(747)-C(5))-methyltransferase (412 aa).

Cys-63, Cys-69, Cys-72, and Cys-139 together coordinate [4Fe-4S] cluster. Gln-255, Tyr-281, Glu-302, and Asp-343 together coordinate S-adenosyl-L-methionine. Cys-369 serves as the catalytic Nucleophile.

The protein belongs to the class I-like SAM-binding methyltransferase superfamily. RNA M5U methyltransferase family.

The enzyme catalyses uridine(747) in 23S rRNA + S-adenosyl-L-methionine = 5-methyluridine(747) in 23S rRNA + S-adenosyl-L-homocysteine + H(+). Its function is as follows. Catalyzes the formation of 5-methyl-uridine at position equivalent to 747 (m5U747) in 23S rRNA. The polypeptide is 23S rRNA (uracil(747)-C(5))-methyltransferase (Pyrococcus horikoshii (strain ATCC 700860 / DSM 12428 / JCM 9974 / NBRC 100139 / OT-3)).